The primary structure comprises 614 residues: Probable pectinesterase/pectinesterase inhibitor 13 (614 aa).

A helical membrane pass occupies residues 25-45 (IIVGTVSLLVVVAAIVGGAFA). Residues 55–102 (QQQQQQQAKNHNKSGSGNNVVKDSDKKSPSPPTPSQKAPVSAAQSVKP) form a disordered region. N-linked (GlcNAc...) asparagine glycosylation is found at Asn66, Asn128, Asn197, Asn243, Asn301, Asn351, and Asn367. The interval 103–255 (GQGDKIIQTL…QVLTSNSLAL (153 aa)) is pectinesterase inhibitor 13. Positions 301 to 598 (NATVAKDGSG…YTVGPFLQGD (298 aa)) are pectinesterase 13. Substrate contacts are provided by Thr376 and Gln406. Asp429 serves as the catalytic Proton donor; for pectinesterase activity. Cysteines 443 and 463 form a disulfide. Asp450 serves as the catalytic Nucleophile; for pectinesterase activity. Residues Arg518 and Trp520 each contribute to the substrate site. 2 N-linked (GlcNAc...) asparagine glycosylation sites follow: Asn522 and Asn588.

The protein in the N-terminal section; belongs to the PMEI family. This sequence in the C-terminal section; belongs to the pectinesterase family. As to expression, expressed in flower buds.

The protein localises to the membrane. It carries out the reaction [(1-&gt;4)-alpha-D-galacturonosyl methyl ester](n) + n H2O = [(1-&gt;4)-alpha-D-galacturonosyl](n) + n methanol + n H(+). It functions in the pathway glycan metabolism; pectin degradation; 2-dehydro-3-deoxy-D-gluconate from pectin: step 1/5. In terms of biological role, acts in the modification of cell walls via demethylesterification of cell wall pectin. This is Probable pectinesterase/pectinesterase inhibitor 13 (PME13) from Arabidopsis thaliana (Mouse-ear cress).